Reading from the N-terminus, the 365-residue chain is Cobalt-precorrin-5B C(1)-methyltransferase (365 aa).

The protein belongs to the CbiD family.

It catalyses the reaction Co-precorrin-5B + S-adenosyl-L-methionine = Co-precorrin-6A + S-adenosyl-L-homocysteine. Its pathway is cofactor biosynthesis; adenosylcobalamin biosynthesis; cob(II)yrinate a,c-diamide from sirohydrochlorin (anaerobic route): step 6/10. Catalyzes the methylation of C-1 in cobalt-precorrin-5B to form cobalt-precorrin-6A. The sequence is that of Cobalt-precorrin-5B C(1)-methyltransferase from Paraburkholderia phytofirmans (strain DSM 17436 / LMG 22146 / PsJN) (Burkholderia phytofirmans).